Consider the following 164-residue polypeptide: Protein-export protein SecB (164 aa).

The protein belongs to the SecB family. As to quaternary structure, homotetramer, a dimer of dimers. One homotetramer interacts with 1 SecA dimer.

The protein localises to the cytoplasm. Its function is as follows. One of the proteins required for the normal export of preproteins out of the cell cytoplasm. It is a molecular chaperone that binds to a subset of precursor proteins, maintaining them in a translocation-competent state. It also specifically binds to its receptor SecA. The protein is Protein-export protein SecB of Stutzerimonas stutzeri (strain A1501) (Pseudomonas stutzeri).